An 82-amino-acid polypeptide reads, in one-letter code: Immediate early response 3-interacting protein 1 (82 aa).

2 helical membrane passes run 2–22 (AFTL…IAVL) and 62–82 (VMRV…LLFG).

Belongs to the YOS1 family.

The protein localises to the endoplasmic reticulum membrane. Functionally, regulator of endoplasmic reticulum secretion that acts as a key determinant of brain size. Required for secretion of extracellular matrix proteins. Required for correct brain development by depositing sufficient extracellular matrix proteins for tissue integrity and the proliferation of neural progenitors. Acts as a regulator of the unfolded protein response (UPR). In Mus musculus (Mouse), this protein is Immediate early response 3-interacting protein 1.